We begin with the raw amino-acid sequence, 75 residues long: uncharacterized protein (75 aa).

This is an uncharacterized protein from Rickettsia conorii (strain ATCC VR-613 / Malish 7).